A 392-amino-acid polypeptide reads, in one-letter code: Solute carrier family 35 member B1 (392 aa).

Residues 1–40 are disordered; the sequence is MSLTKKIKNEKSLKQEKQTDQLKSNLRNNNNNINNKSKPK. Positions 7-20 are enriched in basic and acidic residues; the sequence is IKNEKSLKQEKQTD. The segment covering 25–35 has biased composition (low complexity); that stretch reads NLRNNNNNINN. 9 consecutive transmembrane segments (helical) span residues 57-77, 97-117, 124-144, 155-175, 179-199, 215-235, 247-267, 285-305, and 341-361; these read ELFF…YGLV, AFLL…VSLV, NTPF…TFLS, TQVL…LLLF, YPFL…LFML, HLFG…MGPF, ATSM…IMAF, VIKL…FIFL, and LQWA…YISY. A Di-lysine motif motif is present at residues 389-392; sequence KKSL.

The protein belongs to the nucleotide-sugar transporter family. SLC35B subfamily.

It is found in the endoplasmic reticulum membrane. In terms of biological role, probable sugar transporter. In Dictyostelium discoideum (Social amoeba), this protein is Solute carrier family 35 member B1 (slc35b1).